Reading from the N-terminus, the 248-residue chain is Pyridoxine 5'-phosphate synthase (248 aa).

Asn-12 lines the 3-amino-2-oxopropyl phosphate pocket. 14 to 15 (DH) provides a ligand contact to 1-deoxy-D-xylulose 5-phosphate. Position 23 (Arg-23) interacts with 3-amino-2-oxopropyl phosphate. His-48 acts as the Proton acceptor in catalysis. Positions 50 and 55 each coordinate 1-deoxy-D-xylulose 5-phosphate. Residue Glu-75 is the Proton acceptor of the active site. Position 105 (Thr-105) interacts with 1-deoxy-D-xylulose 5-phosphate. The active-site Proton donor is the His-196. Residues Gly-197 and 218 to 219 (GH) each bind 3-amino-2-oxopropyl phosphate.

The protein belongs to the PNP synthase family. In terms of assembly, homooctamer; tetramer of dimers.

It is found in the cytoplasm. It catalyses the reaction 3-amino-2-oxopropyl phosphate + 1-deoxy-D-xylulose 5-phosphate = pyridoxine 5'-phosphate + phosphate + 2 H2O + H(+). It functions in the pathway cofactor biosynthesis; pyridoxine 5'-phosphate biosynthesis; pyridoxine 5'-phosphate from D-erythrose 4-phosphate: step 5/5. Catalyzes the complicated ring closure reaction between the two acyclic compounds 1-deoxy-D-xylulose-5-phosphate (DXP) and 3-amino-2-oxopropyl phosphate (1-amino-acetone-3-phosphate or AAP) to form pyridoxine 5'-phosphate (PNP) and inorganic phosphate. In Azotobacter vinelandii (strain DJ / ATCC BAA-1303), this protein is Pyridoxine 5'-phosphate synthase.